Here is a 322-residue protein sequence, read N- to C-terminus: Putative ankyrin repeat protein L897 (322 aa).

ANK repeat units follow at residues 88–117 (DNEY…SYDM), 181–210 (NIID…FWAN), and 248–277 (NKNE…QTDH).

The polypeptide is Putative ankyrin repeat protein L897 (Acanthamoeba polyphaga (Amoeba)).